We begin with the raw amino-acid sequence, 536 residues long: MTRRGVLSRIASGIILAWGWKRAVIALLAGALSSLAMEPFNAWPVLFITFPIAVWLIDGSAAGKRRGVPAAAMAGWWFGFGYFVPGLYWIGYAFLVDADTFAWLLPAAICGLPAYLALFTALGFALARLLWRPDSLRILSLAVSLTISEWLRGHLLTGFPWNAFGYALTEPLVLAQSISVIGIWGLTLLTVAIFASPAVLIDGGTNTRRRWAVPAMALGVLAAMTVFGGIRLKLSPTQLVDNVRLRIMQPNLPQDARFNYSAKADVMQKYLSLSDRSTGPKSTGVRDVSLLIWPESAFPFFLSREADAMAQIAELLPKGTVLLTGAVRPPELPPGRRITRAYNSIYAIDHDGSILSVYDKLHLVPFGEFLPYQNLMEKIGFVQLTKVQGGFLSGVARHNLELPNAPPLLPLICYEAIFPDEIAIGNNRPGWMLNLTNDGWFGISSGPYQHLQQARMRAIEQGLPLVRAANTGVSAVIDPVGRIVAELGLGVEGVLDSGLPAPVAPTIYARVGELPAAVLVALVMMLVLLRKRPPGS.

7 helical membrane passes run 10-30 (IASG…LLAG), 42-62 (AWPV…GSAA), 76-96 (WWFG…AFLV), 107-127 (AAIC…FALA), 136-158 (LRIL…LLTG), 181-201 (IGIW…AVLI), and 212-232 (AVPA…GIRL). The 254-residue stretch at 248–501 (MQPNLPQDAR…EGVLDSGLPA (254 aa)) folds into the CN hydrolase domain. The Proton acceptor role is filled by Glu295. Residue Lys360 is part of the active site. Cys413 acts as the Nucleophile in catalysis. Residues 509–529 (ARVGELPAAVLVALVMMLVLL) form a helical membrane-spanning segment.

This sequence belongs to the CN hydrolase family. Apolipoprotein N-acyltransferase subfamily.

The protein resides in the cell inner membrane. It catalyses the reaction N-terminal S-1,2-diacyl-sn-glyceryl-L-cysteinyl-[lipoprotein] + a glycerophospholipid = N-acyl-S-1,2-diacyl-sn-glyceryl-L-cysteinyl-[lipoprotein] + a 2-acyl-sn-glycero-3-phospholipid + H(+). It participates in protein modification; lipoprotein biosynthesis (N-acyl transfer). Functionally, catalyzes the phospholipid dependent N-acylation of the N-terminal cysteine of apolipoprotein, the last step in lipoprotein maturation. The polypeptide is Apolipoprotein N-acyltransferase (Rhodopseudomonas palustris (strain ATCC BAA-98 / CGA009)).